We begin with the raw amino-acid sequence, 319 residues long: Urease accessory protein UreD (319 aa).

Positions 254–273 (PDPVGSPAARRESVPAKRAE) are disordered. A compositionally biased stretch (basic and acidic residues) spans 262-273 (ARRESVPAKRAE).

Belongs to the UreD family. As to quaternary structure, ureD, UreF and UreG form a complex that acts as a GTP-hydrolysis-dependent molecular chaperone, activating the urease apoprotein by helping to assemble the nickel containing metallocenter of UreC. The UreE protein probably delivers the nickel.

The protein localises to the cytoplasm. In terms of biological role, required for maturation of urease via the functional incorporation of the urease nickel metallocenter. The chain is Urease accessory protein UreD from Frankia casuarinae (strain DSM 45818 / CECT 9043 / HFP020203 / CcI3).